The following is a 469-amino-acid chain: Mitochondrial adenyl nucleotide antiporter SLC25A25 (469 aa).

Positions 1–165 are regulatory N-terminal domain; the sequence is MLCLCLYVPI…LYWKHSTIFD (165 aa). Residues 1–189 lie on the Mitochondrial intermembrane side of the membrane; the sequence is MLCLCLYVPI…ERQTGMWWRH (189 aa). EF-hand domains follow at residues 47-80, 78-113, and 114-149; these read TYRQ…QDHE, DHEK…LGVK, and ISEQ…HPVE. Residues D60, D62, D64, Q66, and E71 each contribute to the Ca(2+) site. Residues 151–160 are linker region; it reads IPEIILYWKH. Residues 166 to 469 form a C-terminal transmembrane transporter domain region; the sequence is VGENLTVPDE…LKITLGVQSR (304 aa). Solcar repeat units lie at residues 184-270, 278-363, and 375-463; these read GMWW…MKRL, LRIH…LKNT, and PGVF…LKIT. A helical transmembrane segment spans residues 190–207; sequence LVAGGGAGAVSRTCTAPL. The Mitochondrial matrix segment spans residues 208-244; the sequence is DRLKVLMQVHASRSNNMCIIGGFTQMIREGGAKSLWR. A helical transmembrane segment spans residues 245 to 264; that stretch reads GNGINVLKIAPESAIKFMAY. Over 265-287 the chain is Mitochondrial intermembrane; that stretch reads EQMKRLVGSDQETLRIHERLVAG. A helical membrane pass occupies residues 288–301; the sequence is SLAGAIAQSSIYPM. Topologically, residues 302–337 are mitochondrial matrix; it reads EVLKTRMALRKTGQYSGMLDCAKRILAKEGVAAFYK. A helical transmembrane segment spans residues 338-357; that stretch reads GYIPNMLGIIPYAGIDLAVY. Over 358–380 the chain is Mitochondrial intermembrane; that stretch reads ETLKNTWLQRYAVNSADPGVFVL. Residues 381–398 form a helical membrane-spanning segment; it reads LACGTISSTCGQLASYPL. The Mitochondrial matrix portion of the chain corresponds to 399-437; it reads ALVRTRMQAQASIEGAPEVTMSSLFKQILRTEGAFGLYR. A helical membrane pass occupies residues 438 to 457; that stretch reads GLAPNFMKVIPAVSISYVVY. At 458–469 the chain is on the mitochondrial intermembrane side; sequence ENLKITLGVQSR.

The protein belongs to the mitochondrial carrier (TC 2.A.29) family. As to expression, mainly present in the liver and the skeletal muscle (at protein level).

It localises to the mitochondrion inner membrane. The catalysed reaction is Mg(2+)(out) + phosphate(in) + ATP(out) = Mg(2+)(in) + phosphate(out) + ATP(in). With respect to regulation, activated by an increase in cytosolic calcium levels that induce a conformational change of the N-terminal regulatory domain, uncapping the channel and allowing transport. Functionally, electroneutral antiporter that most probably mediates the transport of adenyl nucleotides through the inner mitochondrial membrane. Originally identified as an ATP-magnesium/inorganic phosphate antiporter, it could have a broader specificity for adenyl nucleotides. By regulating the mitochondrial matrix adenyl nucleotide pool could adapt to changing cellular energetic demands and indirectly regulate adenyl nucleotide-dependent metabolic pathways. The sequence is that of Mitochondrial adenyl nucleotide antiporter SLC25A25 from Rattus norvegicus (Rat).